The sequence spans 296 residues: Ribosomal protein L11 methyltransferase (296 aa).

S-adenosyl-L-methionine-binding residues include Thr151, Gly172, Asp194, and Asn233.

Belongs to the methyltransferase superfamily. PrmA family.

The protein resides in the cytoplasm. The enzyme catalyses L-lysyl-[protein] + 3 S-adenosyl-L-methionine = N(6),N(6),N(6)-trimethyl-L-lysyl-[protein] + 3 S-adenosyl-L-homocysteine + 3 H(+). Functionally, methylates ribosomal protein L11. The protein is Ribosomal protein L11 methyltransferase of Dechloromonas aromatica (strain RCB).